The chain runs to 113 residues: Putative pterin-4-alpha-carbinolamine dehydratase (113 aa).

This sequence belongs to the pterin-4-alpha-carbinolamine dehydratase family.

It carries out the reaction (4aS,6R)-4a-hydroxy-L-erythro-5,6,7,8-tetrahydrobiopterin = (6R)-L-erythro-6,7-dihydrobiopterin + H2O. This is Putative pterin-4-alpha-carbinolamine dehydratase from Saccharophagus degradans (strain 2-40 / ATCC 43961 / DSM 17024).